A 577-amino-acid polypeptide reads, in one-letter code: Heavy metal-associated isoprenylated plant protein 34 (577 aa).

The HMA domain occupies 9–72 (LQTCVLKVNV…KLSKSGKHAE (64 aa)). A metal cation is bound by residues Cys-20 and Cys-23. The span at 77-87 (GGGGGGGGGKG) shows a compositional bias: gly residues. 2 disordered regions span residues 77–136 (GGGG…QPMQ) and 150–451 (AAHG…GPGG). Low complexity predominate over residues 97-106 (NLNMGGNNKP). Gly residues predominate over residues 118–129 (KAGGGGGGGQNH). Positions 168 to 177 (KDQKKSVKFA) are enriched in basic and acidic residues. Over residues 178-213 (DDEDDEFSEDDYDDEDFSEDDYDDDEFDDDEDDDDE) the composition is skewed to acidic residues. A compositionally biased stretch (low complexity) spans 227-244 (HMPPNKMMMPNKMMPQMG). Gly residues-rich tracts occupy residues 245 to 254 (GHHGNGGGPK) and 266 to 281 (FKGG…GGGF). Basic and acidic residues-rich tracts occupy residues 294–326 (KNGK…KTDA) and 344–358 (NGDE…DGHG). 2 stretches are compositionally biased toward gly residues: residues 379–392 (KKGG…GHGG) and 420–451 (GIGG…GPGG). Cys-574 is modified (cysteine methyl ester). Cys-574 carries S-farnesyl cysteine lipidation. The propeptide at 575–577 (SIM) is removed in mature form.

It belongs to the HIPP family.

Heavy-metal-binding protein. The protein is Heavy metal-associated isoprenylated plant protein 34 of Arabidopsis thaliana (Mouse-ear cress).